The primary structure comprises 315 residues: Replication factor C small subunit (315 aa).

G43–T50 contacts ATP.

The protein belongs to the activator 1 small subunits family. RfcS subfamily. Heteromultimer composed of small subunits (RfcS) and large subunits (RfcL).

Part of the RFC clamp loader complex which loads the PCNA sliding clamp onto DNA. This is Replication factor C small subunit from Methanococcus maripaludis (strain DSM 14266 / JCM 13030 / NBRC 101832 / S2 / LL).